The following is a 177-amino-acid chain: Large ribosomal subunit protein uL6 (177 aa).

The protein belongs to the universal ribosomal protein uL6 family. As to quaternary structure, part of the 50S ribosomal subunit.

Its function is as follows. This protein binds to the 23S rRNA, and is important in its secondary structure. It is located near the subunit interface in the base of the L7/L12 stalk, and near the tRNA binding site of the peptidyltransferase center. The sequence is that of Large ribosomal subunit protein uL6 from Saccharophagus degradans (strain 2-40 / ATCC 43961 / DSM 17024).